The primary structure comprises 103 residues: Pseudonajatoxin b homolog (103 aa).

Residues 1-21 (MKTLLLTLVVVTIVCLDLGYT) form the signal peptide. Intrachain disulfides connect C24-C42, C35-C63, C48-C52, C67-C79, and C80-C85.

It belongs to the three-finger toxin family. Long-chain subfamily. Type II alpha-neurotoxin sub-subfamily. In terms of tissue distribution, expressed by the venom gland.

It localises to the secreted. Binds with high affinity to muscular (alpha-1/CHRNA1) and neuronal (alpha-7/CHRNA7) nicotinic acetylcholine receptor (nAChR) and inhibits acetylcholine from binding to the receptor, thereby impairing neuromuscular and neuronal transmission. In Pseudonaja textilis (Eastern brown snake), this protein is Pseudonajatoxin b homolog.